A 341-amino-acid chain; its full sequence is tRNA N6-adenosine threonylcarbamoyltransferase (341 aa).

Positions 112 and 116 each coordinate Fe cation. Substrate is bound by residues 134–138 (LASGG), aspartate 167, glycine 180, and asparagine 279. Position 307 (aspartate 307) interacts with Fe cation.

The protein belongs to the KAE1 / TsaD family. Fe(2+) serves as cofactor.

Its subcellular location is the cytoplasm. It catalyses the reaction L-threonylcarbamoyladenylate + adenosine(37) in tRNA = N(6)-L-threonylcarbamoyladenosine(37) in tRNA + AMP + H(+). Functionally, required for the formation of a threonylcarbamoyl group on adenosine at position 37 (t(6)A37) in tRNAs that read codons beginning with adenine. Is involved in the transfer of the threonylcarbamoyl moiety of threonylcarbamoyl-AMP (TC-AMP) to the N6 group of A37, together with TsaE and TsaB. TsaD likely plays a direct catalytic role in this reaction. The protein is tRNA N6-adenosine threonylcarbamoyltransferase of Rickettsia bellii (strain OSU 85-389).